A 408-amino-acid chain; its full sequence is Hepatocyte nuclear factor 4-gamma (408 aa).

A DNA-binding region (nuclear receptor) is located at residues 9–84 (NCLCAICGDR…AGMKKEAVQN (76 aa)). 2 consecutive NR C4-type zinc fingers follow at residues 12-32 (CAIC…CDGC) and 48-72 (CRFS…LRKC). The residue at position 94 (serine 94) is a Phosphoserine. The NR LBD domain maps to 99–328 (SNIPSINTLA…NLLQEMLLGG (230 aa)). The segment at 368–390 (ISTPETPLPSPPQGSGQEQYKIA) is disordered. 2 positions are modified to phosphothreonine: threonine 370 and threonine 373. Serine 377 carries the post-translational modification Phosphoserine.

This sequence belongs to the nuclear hormone receptor family. NR2 subfamily. Expressed in pancreas, kidney, small intestine and testis. Weakly expressed in colon. Not expressed in liver, skeletal muscle, lung, placenta, brain, heart, peripheral blood, ovary, prostate, thymus and spleen.

It is found in the nucleus. In terms of biological role, transcription factor. Has a lower transcription activation potential than HNF4-alpha. In Homo sapiens (Human), this protein is Hepatocyte nuclear factor 4-gamma (HNF4G).